The following is a 238-amino-acid chain: Large ribosomal subunit protein uL3 (238 aa).

It belongs to the universal ribosomal protein uL3 family. In terms of assembly, part of the 50S ribosomal subunit. Forms a cluster with proteins L14 and L19.

Functionally, one of the primary rRNA binding proteins, it binds directly near the 3'-end of the 23S rRNA, where it nucleates assembly of the 50S subunit. The sequence is that of Large ribosomal subunit protein uL3 from Mesoplasma florum (strain ATCC 33453 / NBRC 100688 / NCTC 11704 / L1) (Acholeplasma florum).